A 194-amino-acid polypeptide reads, in one-letter code: Probable GTP-binding protein EngB (194 aa).

Residues 22-194 (GKPEIALVGR…SVWEWITAHM (173 aa)) enclose the EngB-type G domain. GTP-binding positions include 30–37 (GRSNVGKS), 57–61 (GKTQT), 75–78 (DVPG), 142–145 (TKSD), and 175–177 (FSS). Mg(2+) contacts are provided by serine 37 and threonine 59.

This sequence belongs to the TRAFAC class TrmE-Era-EngA-EngB-Septin-like GTPase superfamily. EngB GTPase family. The cofactor is Mg(2+).

Its function is as follows. Necessary for normal cell division and for the maintenance of normal septation. The polypeptide is Probable GTP-binding protein EngB (Leuconostoc citreum (strain KM20)).